The chain runs to 75 residues: Small ribosomal subunit protein bS18 (75 aa).

This sequence belongs to the bacterial ribosomal protein bS18 family. As to quaternary structure, part of the 30S ribosomal subunit. Forms a tight heterodimer with protein bS6.

Its function is as follows. Binds as a heterodimer with protein bS6 to the central domain of the 16S rRNA, where it helps stabilize the platform of the 30S subunit. This chain is Small ribosomal subunit protein bS18 (rbsR), found in Rhodobacter capsulatus (strain ATCC BAA-309 / NBRC 16581 / SB1003).